A 389-amino-acid polypeptide reads, in one-letter code: Cellobiose 2-epimerase (389 aa).

Belongs to the cellobiose 2-epimerase family.

The protein localises to the cytoplasm. The enzyme catalyses D-cellobiose = beta-D-glucosyl-(1-&gt;4)-D-mannopyranose. With respect to regulation, enhanced by Mg(2+) and Ca(2+) ions, ethylenediaminetetraacetic acid, ethylene glycol tetraacetic acid and citrate. Inhibited by Al(3+), Fe(3+), Co(2+), Cu(2+), Zn(2+), Pb(2+) and Ag(+) ions, iodoacetate, 4-chloromercuribenzoate and N-bromosuccinimide. Functionally, catalyzes the reversible epimerization of cellobiose to 4-O-beta-D-glucopyranosyl-D-mannose (Glc-Man). Can also epimerize cellotriose to Glc-Glc-Man, cellotetraose to Glc-Glc-Glc-Man, and lactose to epilactose. The polypeptide is Cellobiose 2-epimerase (ce-ne1) (Ruminococcus albus).